A 229-amino-acid chain; its full sequence is Secretory carrier-associated membrane protein 4 (229 aa).

Residues 1-39 (MSEKENNFPPLPKFIPVKPCFYQNFSDEIPVEHQVLVKR) lie on the Cytoplasmic side of the membrane. The next 4 helical transmembrane spans lie at 40–60 (IYRL…ACLA), 61–81 (WWIG…LLLF), 105–125 (FMAF…QAIG), and 149–169 (VVML…AIAI). Residues 170–229 (MKVHRIYRGAGGSFQKAQTEWNTGTWRNPPSREAQYNNFSGNSLPEYPTVPSYPGSGQWP) lie on the Cytoplasmic side of the membrane. Thr-194 bears the Phosphothreonine mark. The interval 208 to 229 (FSGNSLPEYPTVPSYPGSGQWP) is disordered.

The protein belongs to the SCAMP family.

The protein resides in the membrane. In terms of biological role, probably involved in membrane protein trafficking. This is Secretory carrier-associated membrane protein 4 (SCAMP4) from Homo sapiens (Human).